Here is a 146-residue protein sequence, read N- to C-terminus: uncharacterized protein (146 aa).

An HTH marR-type domain is found at 1 to 137 (MLSQEFFNSF…TINVMNQIHK (137 aa)).

This is an uncharacterized protein from Staphylococcus aureus (strain MW2).